A 252-amino-acid chain; its full sequence is Small ribosomal subunit protein eS1B (252 aa).

At alanine 2 the chain carries N-acetylalanine; partial. Serine 251 is subject to Phosphoserine.

This sequence belongs to the eukaryotic ribosomal protein eS1 family. As to quaternary structure, component of the small ribosomal subunit (SSU). Mature yeast ribosomes consist of a small (40S) and a large (60S) subunit. The 40S small subunit contains 1 molecule of ribosomal RNA (18S rRNA) and at least 33 different proteins. The large 60S subunit contains 3 rRNA molecules (25S, 5.8S and 5S rRNA) and at least 46 different proteins. eS1 interacts directly with uS11 and eS26, which form part of the mRNA exit tunnel.

It localises to the cytoplasm. Component of the ribosome, a large ribonucleoprotein complex responsible for the synthesis of proteins in the cell. The small ribosomal subunit (SSU) binds messenger RNAs (mRNAs) and translates the encoded message by selecting cognate aminoacyl-transfer RNA (tRNA) molecules. The large subunit (LSU) contains the ribosomal catalytic site termed the peptidyl transferase center (PTC), which catalyzes the formation of peptide bonds, thereby polymerizing the amino acids delivered by tRNAs into a polypeptide chain. The nascent polypeptides leave the ribosome through a tunnel in the LSU and interact with protein factors that function in enzymatic processing, targeting, and the membrane insertion of nascent chains at the exit of the ribosomal tunnel. The protein is Small ribosomal subunit protein eS1B (rps102) of Schizosaccharomyces pombe (strain 972 / ATCC 24843) (Fission yeast).